A 390-amino-acid chain; its full sequence is METFLFTSESVNEGHPDKLCDQISDAILDACLEQDPESKVACETCTKTNMVMVFGEITTAAKVDYEKIVRSTCREIGFISADVGLDADKCNVLVNIEQQSPDIAQGVHGHLTKKPEDIGAGDQGHMFGYATDETPELMPLTHVLATKLGAKLTEVRKNKTCPWLRPDGKTQVTVEYKNDGGAMIPIRVHTVLISTQHDETVTNDEIAADLKEHVIKPVIPAKYLDDNTIFHLNPSGRFVIGGPHGDAGLTGRKIIIDTYGGWGAHGGGAFSGKDPTKVDRSGAYIVRQAAKSVVAAGLARRCIVQVSYAIGVPEPLSVFVDTYKTGTIPDKDILVLIKEAFDFRPGMMAINLDLKRGGNFRFQKTAAYGHFGRDDPDFTWEVVKPLKPKA.

Glutamate 9 contacts Mg(2+). Histidine 15 contacts ATP. Glutamate 43 provides a ligand contact to K(+). Residues glutamate 56 and glutamine 99 each contribute to the L-methionine site. ATP is bound by residues 167–169 (DGK), 235–238 (SGRF), aspartate 246, 252–253 (RK), alanine 269, lysine 273, and lysine 277. An L-methionine-binding site is contributed by aspartate 246. Residue lysine 277 coordinates L-methionine.

The protein belongs to the AdoMet synthase family. Homotetramer. Interacts with GRF3. The cofactor is Mn(2+). It depends on Mg(2+) as a cofactor. Requires Co(2+) as cofactor. K(+) is required as a cofactor.

Its subcellular location is the cytoplasm. The catalysed reaction is L-methionine + ATP + H2O = S-adenosyl-L-methionine + phosphate + diphosphate. It participates in amino-acid biosynthesis; S-adenosyl-L-methionine biosynthesis; S-adenosyl-L-methionine from L-methionine: step 1/1. Inhibited by 5,5'-dithiobis-2-nitrobenzoic acid (DTNB) and N-ethylmaleimide (NEM) (in vitro). Catalyzes the formation of S-adenosylmethionine from methionine and ATP. The reaction comprises two steps that are both catalyzed by the same enzyme: formation of S-adenosylmethionine (AdoMet) and triphosphate, and subsequent hydrolysis of the triphosphate. Involved in the biosynthesis of lignin. This Arabidopsis thaliana (Mouse-ear cress) protein is S-adenosylmethionine synthase 3 (METK3).